Reading from the N-terminus, the 214-residue chain is MSTKLQDHFEKITKILSGFGVEGCISYGEITFSIRDQRDIHLILKKLKKEYLFEQLTDVTAVDYLTYGQSDWQVGKVVSQTGFSRGRQQDFKTAAVDNRFEIIYQLLSMANNVRIRVKCKLKDAQIILVDSVSDLWPSANWAEREVYDMFGIYFNNHPDLRRVLTDYGFVGHPLRKDFPQTGYVEMRYDENLGRVVYEPVEIDDRVNTPRVIRN.

This sequence belongs to the complex I 30 kDa subunit family. NDH-1 is composed of 14 different subunits. Subunits NuoB, C, D, E, F, and G constitute the peripheral sector of the complex.

The protein localises to the cell inner membrane. The catalysed reaction is a quinone + NADH + 5 H(+)(in) = a quinol + NAD(+) + 4 H(+)(out). Its function is as follows. NDH-1 shuttles electrons from NADH, via FMN and iron-sulfur (Fe-S) centers, to quinones in the respiratory chain. The immediate electron acceptor for the enzyme in this species is believed to be ubiquinone. Couples the redox reaction to proton translocation (for every two electrons transferred, four hydrogen ions are translocated across the cytoplasmic membrane), and thus conserves the redox energy in a proton gradient. In Francisella tularensis subsp. holarctica (strain LVS), this protein is NADH-quinone oxidoreductase subunit C.